The primary structure comprises 1330 residues: pre-mRNA 3' end processing protein WDR33 (1330 aa).

N-acetylalanine is present on Ala2. Ser7 is subject to Phosphoserine. Residue Lys46 is modified to N6-acetyllysine. 7 WD repeats span residues 117–156 (KVKC…FETI), 159–198 (AHDS…VKMF), 200–239 (AHKE…EERI), 242–283 (GHGA…SLAT), 286–325 (AHKN…EELQ), 329–369 (GHKK…EVGG), and 373–412 (AHEG…DKMR). Glycyl lysine isopeptide (Lys-Gly) (interchain with G-Cter in SUMO2) cross-links involve residues Lys526, Lys530, and Lys560. The segment at 566–1330 (QKQADQIQPP…GTSRGSGRGR (765 aa)) is disordered. A compositionally biased stretch (polar residues) spans 588–607 (FSGQGPISQIPQGFQQPHPS). Residues 617 to 769 (GPPGPQGQFR…GPASQGIQGP (153 aa)) form the Collagen-like domain. The segment covering 622–642 (QGQFRAPGPQGQMGPQGPPMH) has biased composition (low complexity). Positions 682-694 (PHGPLGPQGPPGP) are enriched in pro residues. 2 stretches are compositionally biased toward low complexity: residues 695 to 706 (QGSSGPQGHMGP) and 725 to 750 (QGHM…GMQG). Arg776 carries the omega-N-methylarginine modification. Over residues 848–863 (GPSGSQGQQGPPQGSL) the composition is skewed to low complexity. Arg909 is modified (asymmetric dimethylarginine). Residues 926–935 (PGLGQQGAQG) are compositionally biased toward low complexity. Composition is skewed to basic and acidic residues over residues 965–983 (SERR…DRGP) and 992–1027 (GPPD…EFEG). Residue Arg981 is modified to Omega-N-methylarginine. Arg1028 carries the omega-N-methylarginine modification. 2 stretches are compositionally biased toward basic and acidic residues: residues 1049–1061 (PDHR…DGRG) and 1071–1115 (EGRR…RGRD). Residues 1123 to 1133 (FGPEEGFDASD) are compositionally biased toward acidic residues. Basic and acidic residues-rich tracts occupy residues 1134–1143 (EAARGRDLRG), 1163–1211 (EFPR…RERS), and 1236–1253 (SEHR…DRGS). At Ser1204 the chain carries Phosphoserine. An Omega-N-methylarginine modification is found at Arg1256. A compositionally biased stretch (basic and acidic residues) spans 1275-1287 (DGDHHDGYHRDEP). Over residues 1293–1323 (GSSSSSRGARSGSNWGRGSNMNSGPPRRGTS) the composition is skewed to low complexity. Position 1309 is an asymmetric dimethylarginine; alternate (Arg1309). At Arg1309 the chain carries Omega-N-methylarginine; alternate.

Belongs to the WD repeat WDR33 family. In terms of assembly, component of the cleavage and polyadenylation specificity factor (CPSF) module of the pre-mRNA 3'-end processing complex. Interacts with CPSF3/CPSF73. In terms of tissue distribution, most highly expressed in testis.

Its subcellular location is the nucleus. Its function is as follows. Essential for both cleavage and polyadenylation of pre-mRNA 3' ends. This chain is pre-mRNA 3' end processing protein WDR33 (Wdr33), found in Mus musculus (Mouse).